Reading from the N-terminus, the 109-residue chain is uncharacterized protein (109 aa).

The N-terminal stretch at 1–19 (MKKFALLAGLFVFAPMTWA) is a signal peptide.

This is an uncharacterized protein from Escherichia coli O6:H1 (strain CFT073 / ATCC 700928 / UPEC).